A 504-amino-acid chain; its full sequence is Heat shock 70 kDa protein 14 (504 aa).

The protein belongs to the heat shock protein 70 family. As to quaternary structure, component of ribosome-associated complex (RAC).

It is found in the cytoplasm. The protein localises to the cytosol. Its function is as follows. Component of the ribosome-associated complex (RAC), a complex involved in folding or maintaining nascent polypeptides in a folding-competent state. This chain is Heat shock 70 kDa protein 14 (hspa14), found in Danio rerio (Zebrafish).